A 207-amino-acid chain; its full sequence is rRNA N(6)-adenosine-methyltransferase METTL5 (207 aa).

S-adenosyl-L-methionine is bound by residues Gln25, Thr28, Gly56, Cys59, Val61, Asp78, and 105–106 (DV).

This sequence belongs to the methyltransferase superfamily. PrmA family.

Its subcellular location is the nucleus. It localises to the presynapse. The protein localises to the postsynapse. It carries out the reaction adenosine(1832) in 18S rRNA + S-adenosyl-L-methionine = N(6)-methyladenosine(1832) in 18S rRNA + S-adenosyl-L-homocysteine + H(+). RRNA N6-adenosine-methyltransferase activity is inhibited by zinc. Functionally, catalytic subunit of a heterodimer with TRMT112, which specifically methylates the 6th position of adenine in position 1832 of 18S rRNA. N6-methylation of adenine(1832) in 18S rRNA resides in the decoding center of 18S rRNA and is required for translation and embryonic stem cells (ESCs) pluripotency and differentiation. This Danio rerio (Zebrafish) protein is rRNA N(6)-adenosine-methyltransferase METTL5.